The sequence spans 473 residues: Ribosomal RNA small subunit methyltransferase F (473 aa).

Residues 124–130, Glu-148, Asp-175, and Asp-193 contribute to the S-adenosyl-L-methionine site; that span reads ASAPGSK. Cys-246 functions as the Nucleophile in the catalytic mechanism.

It belongs to the class I-like SAM-binding methyltransferase superfamily. RsmB/NOP family.

It is found in the cytoplasm. The enzyme catalyses cytidine(1407) in 16S rRNA + S-adenosyl-L-methionine = 5-methylcytidine(1407) in 16S rRNA + S-adenosyl-L-homocysteine + H(+). In terms of biological role, specifically methylates the cytosine at position 1407 (m5C1407) of 16S rRNA. This chain is Ribosomal RNA small subunit methyltransferase F, found in Aliivibrio fischeri (strain MJ11) (Vibrio fischeri).